Here is a 333-residue protein sequence, read N- to C-terminus: Ribosomal RNA small subunit methyltransferase C (333 aa).

Belongs to the methyltransferase superfamily. RsmC family. As to quaternary structure, monomer.

Its subcellular location is the cytoplasm. The catalysed reaction is guanosine(1207) in 16S rRNA + S-adenosyl-L-methionine = N(2)-methylguanosine(1207) in 16S rRNA + S-adenosyl-L-homocysteine + H(+). Functionally, specifically methylates the guanine in position 1207 of 16S rRNA in the 30S particle. This chain is Ribosomal RNA small subunit methyltransferase C, found in Mannheimia succiniciproducens (strain KCTC 0769BP / MBEL55E).